Here is a 458-residue protein sequence, read N- to C-terminus: Tyrosine phenol-lyase (458 aa).

Lysine 258 carries the post-translational modification N6-(pyridoxal phosphate)lysine.

This sequence belongs to the beta-eliminating lyase family. In terms of assembly, homotetramer. Pyridoxal 5'-phosphate serves as cofactor.

The catalysed reaction is L-tyrosine + H2O = phenol + pyruvate + NH4(+). This is Tyrosine phenol-lyase (tpl) from Symbiobacterium thermophilum (strain DSM 24528 / JCM 14929 / IAM 14863 / T).